The following is a 642-amino-acid chain: MPVITLPDGSQRHYDHPVSPMDVALDIGPGLAKATIAGRVNGELVDASDLIENDATLAIITAKDEEGLEIIRHSCAHLLGHAIKQLWPHTKMAIGPVVDNGFYYDVDLDRTLTQEDVEALEKRMHELAEKNYDVIKKKVSWHDARETFVKRGETYKVAILDENIAHDDKPGLYHHEEYVDMCRGPHVPNMRFCHHFKLMKTAGAYWRGDSNNKMLQRIYGTAWADKKALNAYLQRLEEAAKRDHRKIGKQLDLYHMQEEAPGMVFWHNDGWTIFRELEVFVRSKLKEYQYQEVKGPFMMGRVLWEKTGHWDNYKDAMFTTSSENREYCIKPMNCPGHVQIFNQGLKSYRDLPLRMAEFGSCHRNEPSGALHGLMRVRGFTQDDAHIFCTEEQIRDEVNACIRMVYDMYSTFGFEKIVVKLSTRPDKRIGSDEMWDRAEADLAVALEENNIPFEYQLGEGAFYGPKIEFTLYDCLDRAWQCGTVQLDFSLPSRLSASYVGEDNERKVPVMIHRAILGSMERFIGILTEEFAGFFPTWLAPVQVVVMNITDSQSEYVNELTQKLQNAGIRVKADLRNEKIGFKIREHTLRRVPYMLVCGDKEVEAGKVAVRTRRGKDLGSLDVNDVIEKLQQEIRSRSLQQLEE.

Residues 1–61 (MPVITLPDGS…ENDATLAIIT (61 aa)) enclose the TGS domain. Residues 243-534 (DHRKIGKQLD…LTEEFAGFFP (292 aa)) are catalytic. 3 residues coordinate Zn(2+): Cys334, His385, and His511.

The protein belongs to the class-II aminoacyl-tRNA synthetase family. Homodimer. It depends on Zn(2+) as a cofactor.

It localises to the cytoplasm. The catalysed reaction is tRNA(Thr) + L-threonine + ATP = L-threonyl-tRNA(Thr) + AMP + diphosphate + H(+). Functionally, catalyzes the attachment of threonine to tRNA(Thr) in a two-step reaction: L-threonine is first activated by ATP to form Thr-AMP and then transferred to the acceptor end of tRNA(Thr). Also edits incorrectly charged L-seryl-tRNA(Thr). The protein is Threonine--tRNA ligase of Salmonella gallinarum (strain 287/91 / NCTC 13346).